The primary structure comprises 344 residues: MVTERQQDILNLIIDIFTKTHEPVGSKALQESINSSSATIRNDMAELEKQGLLEKAHTSSGRMPSVAGFQYYVKHSLDFDRLAENEVYEIVKAFDQEFFKLEDILQEAANLLTDLSGCTVVALDVEPSRQRLTAFDIVVLGQHTALAVFTLDESRTVTSQFLIPRNFLQEDLLKLKSIIQERFLGHTVLDIHYKIRTEIPQIIQRYFTTTDNVIDLFEHIFKEMFNENIVMAGKVHLLNFANLAAYQFFDQPQKVALEIREGLREDQMQNVRVADGQESCLADLAVISSKFLIPYRGVGILAIIGPVNLDYQQLINQVNVVNRVLTMKLTDFYRYLSSNHYEVH.

Belongs to the HrcA family.

Negative regulator of class I heat shock genes (grpE-dnaK-dnaJ and groELS operons). Prevents heat-shock induction of these operons. This is Heat-inducible transcription repressor HrcA from Streptococcus pneumoniae serotype 19F (strain G54).